The sequence spans 548 residues: Chaperonin GroEL (548 aa).

ATP-binding positions include 30–33, Lys51, 87–91, Gly415, 479–481, and Asp495; these read TLGP, DGTTT, and NAA.

This sequence belongs to the chaperonin (HSP60) family. In terms of assembly, forms a cylinder of 14 subunits composed of two heptameric rings stacked back-to-back. Interacts with the co-chaperonin GroES.

It localises to the cytoplasm. The enzyme catalyses ATP + H2O + a folded polypeptide = ADP + phosphate + an unfolded polypeptide.. Functionally, together with its co-chaperonin GroES, plays an essential role in assisting protein folding. The GroEL-GroES system forms a nano-cage that allows encapsulation of the non-native substrate proteins and provides a physical environment optimized to promote and accelerate protein folding. The protein is Chaperonin GroEL of Salmonella arizonae (strain ATCC BAA-731 / CDC346-86 / RSK2980).